The primary structure comprises 237 residues: 1-(5-phosphoribosyl)-5-[(5-phosphoribosylamino)methylideneamino] imidazole-4-carboxamide isomerase (237 aa).

D8 functions as the Proton acceptor in the catalytic mechanism. The active-site Proton donor is the D127.

Belongs to the HisA/HisF family.

The protein resides in the cytoplasm. The enzyme catalyses 1-(5-phospho-beta-D-ribosyl)-5-[(5-phospho-beta-D-ribosylamino)methylideneamino]imidazole-4-carboxamide = 5-[(5-phospho-1-deoxy-D-ribulos-1-ylimino)methylamino]-1-(5-phospho-beta-D-ribosyl)imidazole-4-carboxamide. It functions in the pathway amino-acid biosynthesis; L-histidine biosynthesis; L-histidine from 5-phospho-alpha-D-ribose 1-diphosphate: step 4/9. This is 1-(5-phosphoribosyl)-5-[(5-phosphoribosylamino)methylideneamino] imidazole-4-carboxamide isomerase from Sulfurovum sp. (strain NBC37-1).